Reading from the N-terminus, the 280-residue chain is Succinate dehydrogenase [ubiquinone] iron-sulfur subunit, mitochondrial (280 aa).

The N-terminal 28 residues, 1–28 (MAAVVALSLRRRFPAAALGGARLQACRG), are a transit peptide targeting the mitochondrion. A 2Fe-2S ferredoxin-type domain is found at 40–133 (KKFAIYRWDP…VSKIYPLPHM (94 aa)). 2 positions are modified to N6-acetyllysine: lysine 51 and lysine 55. Residues cysteine 93, cysteine 98, cysteine 101, and cysteine 113 each coordinate [2Fe-2S] cluster. The tract at residues 146–218 (FYAQYKSIEP…PAVLMQAYRW (73 aa)) is interaction with SDHAF1. The 4Fe-4S ferredoxin-type domain maps to 176 to 206 (DREKLDGLYECILCACCSTSCPSYWWNGDKY). Cysteine 186, cysteine 189, and cysteine 192 together coordinate [4Fe-4S] cluster. Cysteine 196 contacts [3Fe-4S] cluster. Tryptophan 201 lines the a ubiquinone pocket. Positions 243 and 249 each coordinate [3Fe-4S] cluster. [4Fe-4S] cluster is bound at residue cysteine 253.

Belongs to the succinate dehydrogenase/fumarate reductase iron-sulfur protein family. Component of complex II composed of four subunits: the flavoprotein (FP) SDHA, iron-sulfur protein (IP) SDHB, and a cytochrome b560 composed of SDHC and SDHD. Interacts with SDHAF1; the interaction is required for iron-sulfur cluster incorporation into SDHB. It depends on [2Fe-2S] cluster as a cofactor. Requires [3Fe-4S] cluster as cofactor. [4Fe-4S] cluster serves as cofactor.

Its subcellular location is the mitochondrion inner membrane. The enzyme catalyses a quinone + succinate = fumarate + a quinol. It carries out the reaction (R)-malate + a quinone = enol-oxaloacetate + a quinol. It catalyses the reaction (S)-malate + a quinone = enol-oxaloacetate + a quinol. It participates in carbohydrate metabolism; tricarboxylic acid cycle; fumarate from succinate (eukaryal route): step 1/1. Its activity is regulated as follows. Enol-oxaloacetate inhibits the succinate dehydrogenase activity. Iron-sulfur protein (IP) subunit of the succinate dehydrogenase complex (mitochondrial respiratory chain complex II), responsible for transferring electrons from succinate to ubiquinone (coenzyme Q). SDH also oxidizes malate to the non-canonical enol form of oxaloacetate, enol-oxaloacetate. Enol-oxaloacetate, which is a potent inhibitor of the succinate dehydrogenase activity, is further isomerized into keto-oxaloacetate. The polypeptide is Succinate dehydrogenase [ubiquinone] iron-sulfur subunit, mitochondrial (SDHB) (Bos taurus (Bovine)).